The primary structure comprises 557 residues: Low affinity inorganic phosphate transporter 8 (557 aa).

Residues 1–20 (MATSHGVLRSLDNAKTQSYH) are Cytoplasmic-facing. A helical transmembrane segment spans residues 21–41 (YLAIVIAGMGFFTDAYDLFCI). Residues 42–70 (TAVTKLIGRLYYSDPTNHSPGILPTNVNN) are Extracellular-facing. Residues 71–91 (AITGVALCGTLAGQLFFGWLG) form a helical membrane-spanning segment. The Cytoplasmic segment spans residues 92 to 98 (DKLGRKK). A helical transmembrane segment spans residues 99 to 119 (VYGITLTTMVGFALLSGLSFG). At 120-130 (STPKTVVTSLC) the chain is on the extracellular side. A helical transmembrane segment spans residues 131-151 (FFRFWLGFGIGGDYPLSAVIM). Residues 152–162 (SEYANQKTRGS) lie on the Cytoplasmic side of the membrane. A helical membrane pass occupies residues 163-183 (FIAAVFAMQGVGILVAGGVAM). The Extracellular segment spans residues 184–210 (FVSKLFLLYFPAPDFETDAVLSTQPEG). Residues 211–231 (DFVWRIVLMFGAVPAALTYYW) form a helical membrane-spanning segment. Residues 232-294 (RMKMPETARY…LFSSEFLNRH (63 aa)) lie on the Cytoplasmic side of the membrane. Residues 295–315 (GLHLLGTTSTWFLLDIAFYSL) traverse the membrane as a helical segment. Residues 316–346 (QLTQKDIYPTSGLVYKASKMNAIEEVFQLSR) are Extracellular-facing. The chain crosses the membrane as a helical span at residues 347–367 (AMFAVALIATVPGYWCTVFLI). At 368-369 (EK) the chain is on the cytoplasmic side. The chain crosses the membrane as a helical span at residues 370 to 390 (IGRFRIQLIGFLVMSVCMWFL). The Extracellular portion of the chain corresponds to 391-414 (GHNYRSFRGEESACKNGSKYSFCN). Residue Asn-406 is glycosylated (N-linked (GlcNAc...) asparagine). A helical membrane pass occupies residues 415–435 (GNPVMFAILFGLTLFFANFGP). Topologically, residues 436–457 (NSTTFIVPAELFPARLRSTCHG) are cytoplasmic. The helical transmembrane segment at 458 to 478 (ISAAAGKSGAIVGAFGVQSYI) threads the bilayer. Residues 479 to 490 (GNSHDKSKGTKQ) lie on the Extracellular side of the membrane. The chain crosses the membrane as a helical span at residues 491–511 (AIMALAVVNLLGFFFTFLVPE). At 512 to 557 (TQGRSLEEISGEEKDFQGNNADEEISGERNGTRNASVDKSPETSMV) the chain is on the cytoplasmic side. Positions 519-557 (EISGEEKDFQGNNADEEISGERNGTRNASVDKSPETSMV) are disordered. The span at 543–557 (TRNASVDKSPETSMV) shows a compositional bias: polar residues.

The protein belongs to the major facilitator superfamily. Phosphate:H(+) symporter (TC 2.A.1.9) family.

Its subcellular location is the cell membrane. The enzyme catalyses phosphate(in) + H(+)(in) = phosphate(out) + H(+)(out). Low-affinity transporter for external inorganic phosphate (Pi) that may be involved in the acquisition of phosphate released by arbuscular mycorrhizal (AM) fungi (e.g. Glomus versiforme and G.intraradices) during AM symbiosis; not required for mycorrhizal arbuscule development. The chain is Low affinity inorganic phosphate transporter 8 from Medicago truncatula (Barrel medic).